Here is a 1066-residue protein sequence, read N- to C-terminus: Vinculin (1066 aa).

Residues 1–835 (MPVFHTRTIE…GAVAKVREAF (835 aa)) are N-terminal globular head. Residue Ser97 is modified to Phosphoserine. Residues 168-208 (MTKMAKMIDERQQELTHQEHRVMLVNSMNTVKELLPVLISA) are talin-interaction. Lys173 is modified (N6-acetyllysine). A run of 3 repeats spans residues 259–369 (ASKD…KVEN), 370–479 (AARK…KTNR), and 480–589 (AVAN…QMQE). Positions 259–589 (ASKDTEAMKR…LKDLKTQMQE (331 aa)) are 3 X 112 AA tandem repeats. Phosphoserine is present on residues Ser260, Ser272, Ser275, Ser290, Ser346, and Ser434. N6-acetyllysine is present on Lys496. Residue Tyr537 is modified to Phosphotyrosine. 3 positions are modified to phosphoserine: Ser574, Ser579, and Ser600. Phosphothreonine is present on residues Thr604 and Thr672. Ser721 is subject to Phosphoserine. Residues 741-764 (MANIQPQMLVAGATSIARRANRIL) form an interaction with ACTN4 region. 2 positions are modified to phosphoserine: Ser795 and Ser809. A Phosphotyrosine modification is found at Tyr822. The interval 836 to 878 (QPQEPDFPPPPPDLEQLRLTDELAPPKPPLPEGEVPPPRPPPP) is linker (Pro-rich). A disordered region spans residues 857-887 (ELAPPKPPLPEGEVPPPRPPPPEEKDEEFPE). The span at 860–876 (PPKPPLPEGEVPPPRPP) shows a compositional bias: pro residues. The segment at 879–1066 (EEKDEEFPEQ…RWVRKTPWYQ (188 aa)) is C-terminal tail. 2 facilitates phospholipid membrane insertion regions span residues 935 to 978 (RLVR…KRIR) and 1052 to 1066 (AGFT…PWYQ). Tyr1065 carries the post-translational modification Phosphotyrosine; by SRC-type Tyr-kinases.

The protein belongs to the vinculin/alpha-catenin family. Exhibits self-association properties. Part of a complex composed of THSD1, PTK2/FAK1, TLN1 and VCL. Interacts with APBB1IP, NRAP and TLN1. Interacts with CTNNB1 and this interaction is necessary for its localization to the cell-cell junctions and for its function in regulating cell surface expression of E-cadherin. Interacts with SORBS1. Interacts with SYNM. Interacts with CTNNA1. Binds to ACTN4; this interaction triggers conformational changes. Interacts with FLII. In terms of processing, phosphorylated; on serines, threonines and tyrosines. Phosphorylation on Tyr-1065 in activated platelets affects head-tail interactions and cell spreading but has no effect on actin binding nor on localization to focal adhesion plaques. Post-translationally, acetylated; mainly by myristic acid but also by a small amount of palmitic acid.

The protein localises to the cell membrane. It is found in the cell junction. Its subcellular location is the adherens junction. The protein resides in the focal adhesion. It localises to the cytoplasm. The protein localises to the cytoskeleton. It is found in the sarcolemma. Its subcellular location is the cell projection. The protein resides in the podosome. Actin filament (F-actin)-binding protein involved in cell-matrix adhesion and cell-cell adhesion. Regulates cell-surface E-cadherin expression and potentiates mechanosensing by the E-cadherin complex. May also play important roles in cell morphology and locomotion. This Rattus norvegicus (Rat) protein is Vinculin.